The sequence spans 443 residues: Protein translocase subunit SecY (443 aa).

Transmembrane regions (helical) follow at residues 24-44 (LFVI…IPGI), 77-97 (IFAL…LLTV), 125-145 (LVLA…MPGM), 154-174 (FAFY…LMWL), 183-203 (IGNG…PPAI), 217-237 (FLVL…VVFV), 274-294 (VIPA…ASWF), 317-337 (YVLL…ALVF), 370-390 (MTRL…IPEF), and 397-417 (VPFY…MDFM).

It belongs to the SecY/SEC61-alpha family. As to quaternary structure, component of the Sec protein translocase complex. Heterotrimer consisting of SecY, SecE and SecG subunits. The heterotrimers can form oligomers, although 1 heterotrimer is thought to be able to translocate proteins. Interacts with the ribosome. Interacts with SecDF, and other proteins may be involved. Interacts with SecA.

The protein resides in the cell inner membrane. In terms of biological role, the central subunit of the protein translocation channel SecYEG. Consists of two halves formed by TMs 1-5 and 6-10. These two domains form a lateral gate at the front which open onto the bilayer between TMs 2 and 7, and are clamped together by SecE at the back. The channel is closed by both a pore ring composed of hydrophobic SecY resides and a short helix (helix 2A) on the extracellular side of the membrane which forms a plug. The plug probably moves laterally to allow the channel to open. The ring and the pore may move independently. This chain is Protein translocase subunit SecY, found in Escherichia coli O157:H7.